The sequence spans 321 residues: Methionine import ATP-binding protein MetN (321 aa).

Residues 2 to 237 enclose the ABC transporter domain; sequence ISIKNVNKYY…NTKGLRKLIG (236 aa). 34–41 lines the ATP pocket; that stretch reads GHSGAGKS.

The protein belongs to the ABC transporter superfamily. Methionine importer (TC 3.A.1.24) family. In terms of assembly, the complex is composed of two ATP-binding proteins (MetN), two transmembrane proteins (MetI) and a solute-binding protein (MetQ).

The protein resides in the cell membrane. It carries out the reaction L-methionine(out) + ATP + H2O = L-methionine(in) + ADP + phosphate + H(+). It catalyses the reaction D-methionine(out) + ATP + H2O = D-methionine(in) + ADP + phosphate + H(+). Part of the ABC transporter complex MetNIQ involved in methionine import. Responsible for energy coupling to the transport system. The chain is Methionine import ATP-binding protein MetN from Clostridioides difficile (strain 630) (Peptoclostridium difficile).